The primary structure comprises 136 residues: MTGSDISHILKEGELEKRSDNLLQFWKRKTCVLTTDSLNIYTDQQKKNKSKELKLQSIKKVDCVEHTGKFVYFTIVTTDNKEIDFRCSDEKNCWNAVIAIALVNFQNRKAIQGFKTQKESENTSLGQQERCMARAP.

Residues I9–V103 form the PH domain.

Belongs to the PHLDA2 family.

The protein resides in the cytoplasm. It localises to the membrane. Functionally, plays a role in regulating placenta growth. May act via its PH domain that competes with other PH domain-containing proteins, thereby preventing their binding to membrane lipids. This chain is Pleckstrin homology-like domain family A member 2 (phlda2), found in Danio rerio (Zebrafish).